Here is a 541-residue protein sequence, read N- to C-terminus: Protein wntless homolog B (541 aa).

At 1–15 (MAGAIIENMSTKKLC) the chain is on the cytoplasmic side. The helical transmembrane segment at 16–36 (MVGVALLLLQVLAFLVGGLIA) threads the bilayer. The Lumenal portion of the chain corresponds to 37–232 (PKPTTYVNPV…SIFQNGGFTM (196 aa)). Residues 233–253 (VWFAMKTFLTPCIIIIMIWYW) form a helical membrane-spanning segment. Residues 254–268 (RRITMMTRSPVLLEK) lie on the Cytoplasmic side of the membrane. The chain crosses the membrane as a helical span at residues 269–289 (VIFALGISMTFINIPVEWFSI). Residues 290–303 (GYDWTWMLLFGDIR) lie on the Lumenal side of the membrane. A helical membrane pass occupies residues 304–324 (QGIFYAMLLSFWIIFCGEHMM). Residues 325–331 (DQAERNR) lie on the Cytoplasmic side of the membrane. A helical membrane pass occupies residues 332-352 (ISIYWKQVGPIAFGSCCLFIF). The Lumenal segment spans residues 353–379 (DMCERGVQLKNPFYSIWTTDVGAEIAM). Residues 380-400 (AFIIVAGICACLYFLFLCFMV) traverse the membrane as a helical segment. The Cytoplasmic segment spans residues 401 to 431 (YQVFRNISGKRSNLPAMSKARRLHYEGLIFR). The helical transmembrane segment at 432 to 452 (FKFLMIITLACAALTVVFFIT) threads the bilayer. Residues 453-471 (TQITEGNWKLGDLSIELNS) lie on the Lumenal side of the membrane. Residues 472-492 (AFFTGIYGMWNLYVFALMFLY) form a helical membrane-spanning segment. Residues 493 to 541 (APSHKHYGDGQSNDGAGMSSGEELQLTTTITHIDGPTELYRLAGKEAQE) are Cytoplasmic-facing.

The protein belongs to the wntless family. As to expression, enriched in the animal hemisphere of the early cleavage embryo, where expression persists until the late gastrula stage. At the neurula stage, strongly expressed at the border of the neural plate and dorsal midline. After the neurula stage, expressed in various organs, including the eye, liver, heart, pronephros, otic vesicle, and dorsal neural tube. Expression in the developing eye is dynamic; expressed in the eye field from stages 23 to 27, and from stage 30 expression is confined to distinct regions including the central part and border of the eye.

It localises to the golgi apparatus membrane. Its subcellular location is the cytoplasmic vesicle membrane. Required for a subset of Wnt-dependent developmental processes, in particular, eye and pronephros development. Regulates the secretion of wnt4, which is required for eye development. In Xenopus laevis (African clawed frog), this protein is Protein wntless homolog B (wls-b).